Here is a 377-residue protein sequence, read N- to C-terminus: MAVNVNTNVSAMTAQRYLNSASNAQQLSMERLSSGFKINNAKDDAAGLQISNRLNVQSRGLDVAVRNANDGISIAQTAEGAMNETTNILQRMRDLSLQSSNGSNSKADRVAIQEEITALNDELNRIAETTSFGGNKLLNGTFETKSFQIGADNGEAVMLSLNNMRSDNAMMGGKSYQAANGQDKDWTVKAGANDLTITLTDKRTGEQTINLSAKDGDDIEELATYINGQTDMLKASVDDEGKLQIFTDSNRIDGVATFGGSLAGELSFQAAKDVTVDTIDVTSVGGSQESVAIVDAALQFVDSHRAQLGAFQNRFNHAINNLDNINENVNASKSRIKDTDFAKETTALTKSQILSQASSSVLAQAKQAPNAALGLLG.

Coiled coils occupy residues 103–129 (SNSK…IAET) and 301–340 (VDSH…KDTD).

This sequence belongs to the bacterial flagellin family. As to quaternary structure, heteromer of multiple flagellin subunits including FlaA, FlaB, FlaC, FlaD and possibly FlaE.

It localises to the secreted. The protein resides in the bacterial flagellum. Its function is as follows. Flagellin is the subunit protein which polymerizes to form the filaments of bacterial flagella. FlaC is not essential for flagellar synthesis and motility. The polypeptide is Flagellin C (flaC) (Vibrio anguillarum (Listonella anguillarum)).